The following is a 66-amino-acid chain: MPKLKTKSGAKKRFKVTATGKVMHAQRGKRHGMIKRTKKQIRQLRGTRVLFKTDGDNVKKYFLPNA.

This sequence belongs to the bacterial ribosomal protein bL35 family.

The sequence is that of Large ribosomal subunit protein bL35 from Bradyrhizobium diazoefficiens (strain JCM 10833 / BCRC 13528 / IAM 13628 / NBRC 14792 / USDA 110).